A 334-amino-acid polypeptide reads, in one-letter code: Large ribosomal subunit protein uL3 (334 aa).

Residues 1 to 10 (MGMKKSRPRR) are compositionally biased toward basic residues. Residues 1 to 20 (MGMKKSRPRRGSLAFSPRKR) are disordered.

This sequence belongs to the universal ribosomal protein uL3 family. Part of the 50S ribosomal subunit. Forms a cluster with proteins L14 and L24e.

Functionally, one of the primary rRNA binding proteins, it binds directly near the 3'-end of the 23S rRNA, where it nucleates assembly of the 50S subunit. This is Large ribosomal subunit protein uL3 from Methanococcus maripaludis (strain C7 / ATCC BAA-1331).